Reading from the N-terminus, the 1436-residue chain is ABC transporter C family member 15 (1436 aa).

7 consecutive transmembrane segments (helical) span residues 8–28, 129–149, 165–185, 238–258, 261–281, 349–369, and 373–393; these read IINK…IYLY, YIAT…PLIL, IYIG…NMAS, FFQY…IQIL, LGFL…VMLI, IIYW…VLVS, and TYTL…ITIL. Residues 128-412 form the ABC transmembrane type-1 1 domain; sequence NYIATGLFVF…LPDCLHKFIS (285 aa). The 224-residue stretch at 543 to 766 folds into the ABC transporter 1 domain; the sequence is ADYQDLLSIN…IDFEMILKEK (224 aa). Position 575 to 582 (575 to 582) interacts with ATP; that stretch reads GGVRSGKT. Residues 865–1155 form the ABC transmembrane type-1 2 domain; sequence KKYIRMGSSI…FMRQFGELES (291 aa). A run of 6 helical transmembrane segments spans residues 873 to 893, 919 to 939, 985 to 1005, 1017 to 1039, 1101 to 1121, and 1127 to 1147; these read SISF…ILLL, LIYL…YLLI, IDIL…CLVT, IAIP…NYSV, IGIR…LFSI, and GLSA…NWFM. An ABC transporter 2 domain is found at 1193-1426; the sequence is IEFKNVEIRY…STSRFSKLIK (234 aa). Residue 1227–1234 participates in ATP binding; the sequence is GRSGSGKS.

Belongs to the ABC transporter superfamily. ABCC family. Conjugate transporter (TC 3.A.1.208) subfamily.

Its subcellular location is the membrane. The chain is ABC transporter C family member 15 (abcC15) from Dictyostelium discoideum (Social amoeba).